The following is a 256-amino-acid chain: Enoyl-[acyl-carrier-protein] reductase [NADPH] FabI (256 aa).

NADP(+) contacts are provided by residues Gly13, 19–20 (SI), 40–44 (RKERS), 66–67 (DV), and Ile94. Ala97 contacts substrate. Active-site proton acceptor residues include Tyr147 and Tyr157. NADP(+) contacts are provided by residues Lys164 and 193–197 (IRTLS).

The protein belongs to the short-chain dehydrogenases/reductases (SDR) family. FabI subfamily. In terms of assembly, homotetramer.

It carries out the reaction a 2,3-saturated acyl-[ACP] + NADP(+) = a (2E)-enoyl-[ACP] + NADPH + H(+). It functions in the pathway lipid metabolism; fatty acid biosynthesis. Its function is as follows. Catalyzes the reduction of a carbon-carbon double bond in an enoyl moiety that is covalently linked to an acyl carrier protein (ACP). Involved in the elongation cycle of fatty acid which are used in the lipid metabolism. The chain is Enoyl-[acyl-carrier-protein] reductase [NADPH] FabI (fabI) from Staphylococcus aureus (strain MRSA252).